The sequence spans 662 residues: DNA topoisomerase 4 subunit B (662 aa).

Residues Tyr20, Asn60, Asp87, 129-135, and Lys359 contribute to the ATP site; that span reads GLHGVGI. The 115-residue stretch at 439–553 folds into the Toprim domain; sequence TELFIVEGDS…EGHLYLAKPP (115 aa). Positions 445, 518, and 520 each coordinate Mg(2+).

The protein belongs to the type II topoisomerase family. ParE type 1 subfamily. Heterotetramer composed of ParC and ParE. The cofactor is Mg(2+). It depends on Mn(2+) as a cofactor. Ca(2+) serves as cofactor.

The enzyme catalyses ATP-dependent breakage, passage and rejoining of double-stranded DNA.. In terms of biological role, topoisomerase IV is essential for chromosome segregation. It relaxes supercoiled DNA. Performs the decatenation events required during the replication of a circular DNA molecule. This chain is DNA topoisomerase 4 subunit B, found in Rickettsia felis (strain ATCC VR-1525 / URRWXCal2) (Rickettsia azadi).